Here is a 56-residue protein sequence, read N- to C-terminus: Large ribosomal subunit protein bL33 (56 aa).

It belongs to the bacterial ribosomal protein bL33 family.

This chain is Large ribosomal subunit protein bL33, found in Helicobacter hepaticus (strain ATCC 51449 / 3B1).